The sequence spans 174 residues: MSRIGIFYGSSSGVTGKVAEKLAELLGEERCDLYNMEEDFVDFDDMLKYDHLLFGCSTWGSGEVQNDWRDPLLELDNEKPDFSGKTIALFGAGDYVSHGEQFVSALGVLYDKFKARGAALVGSFPTDGYTYEYSFAVRDGKFVGLPFDKINEVDKTDERLERWIAVLQEEFLPA.

The 165-residue stretch at 4–168 (IGIFYGSSSG…RLERWIAVLQ (165 aa)) folds into the Flavodoxin-like domain. Residues 10-14 (SSSGV) and 89-122 (LFGA…ALVG) contribute to the FMN site.

It depends on FMN as a cofactor.

Its function is as follows. Flavodoxins are low-potential electron donors to a number of redox enzymes. AvFld 1 is able to donate electrons to the assimilatory nitrate reductase of A.vinelandii to catalyze the reduction of nitrate to nitrite. In Azotobacter vinelandii (strain DJ / ATCC BAA-1303), this protein is Flavodoxin 1.